Consider the following 442-residue polypeptide: UDP-glucosyltransferase 29 (442 aa).

The active-site Proton acceptor is the His20. His20 contacts an anthocyanidin. The active-site Charge relay is the Asp116. UDP-alpha-D-glucose contacts are provided by Thr138, Ala318, Gln320, His335, Trp338, Ser340, Glu343, Asp359, and Gln360.

Belongs to the UDP-glycosyltransferase family. As to expression, expressed at higher levels in roots than in leaves.

It carries out the reaction (20S)-ginsenoside F2 + UDP-alpha-D-glucose = (20S)-ginsenoside Rd + UDP + H(+). The catalysed reaction is (20S)-ginsenoside Rh2 + UDP-alpha-D-glucose = (20S)-ginsenoside Rg3 + UDP + H(+). It participates in secondary metabolite biosynthesis; terpenoid biosynthesis. Functionally, component of the dammarane-type triterpene saponins (e.g. PPD-type ginsenosides or panaxosides) biosynthetic pathway. Glycosyltransferase that catalyzes the conversion of ginsenoside Rh2 to ginsenoside Rg3. Triggers the biosynthesis of ginsenoside Rd from ginsenoside F2. The chain is UDP-glucosyltransferase 29 from Panax ginseng (Korean ginseng).